The following is a 268-amino-acid chain: Mesoderm posterior protein 1 (268 aa).

Residues 17–93 (AAWGPTRRPP…RQSASEREKL (77 aa)) are disordered. Residues 36–48 (LVSSPDSWGSTPA) are compositionally biased toward polar residues. A compositionally biased stretch (low complexity) spans 66 to 86 (APSVGRRGARSSRLGSGQRQS). Positions 82 to 136 (GQRQSASEREKLRMRTLARALHELRRFLPPSVAPAGQSLTKIETLRLAIRYIGHL) constitute a bHLH domain. The CPLCP motif lies at 163–167 (CPLCP). A run of 2 repeats spans residues 182 to 183 (GQ) and 184 to 185 (GQ). Residues 182–185 (GQGQ) are 2 X 2 AA tandem repeats of G-Q.

It localises to the nucleus. Functionally, transcription factor. Plays a role in the epithelialization of somitic mesoderm and in the development of cardiac mesoderm. Defines the rostrocaudal patterning of the somites by participating in distinct Notch pathways. This is Mesoderm posterior protein 1 (MESP1) from Homo sapiens (Human).